The primary structure comprises 465 residues: MVIYDSSKKEYCSLEPLKNRHIKVYVCGPTVYDDAHLGHARSAIAFDLLRRTLNALGYKTTFMKNFTDIDDKIIKKMNETGKSLQEITSYYIQRYLEDMEALGVQRADIEPKATQNLDAMIDMIERLLQKECAYQTPNGDIYFDTSKDEKYCTLSHKCDEESMSRIEPNPDKKNPADFALWKRCKGEGDVCFDSPFGKGRPGWHIECSAMIDKHLAYHDTPFQIDIHAGGADLLFPHHENEAAQTRCACNQELAKYWMHNGFVTISGEKMSKSLGNSFFIKDALKVYDGEILRFYLLSTHYRSDLNFNEEDLLASKKRLDKLYRLKKRVYGVQASTPQKEFVDELLQALSQDLNISKTLAAIDQFIAYANEHLDNNPKDKAFKKQIVANIEYISKLLGIGHKDAYSYFHLGISEEEKQKIEELIEKRTTAKKEKNFQLADSIREELRSMGIAIMDTPQGTLWEKI.

Residue C27 participates in Zn(2+) binding. The short motif at 29–39 (PTVYDDAHLGH) is the 'HIGH' region element. Zn(2+)-binding residues include C207, H237, and E241. Positions 269–273 (KMSKS) match the 'KMSKS' region motif. Residue K272 coordinates ATP.

The protein belongs to the class-I aminoacyl-tRNA synthetase family. Monomer. The cofactor is Zn(2+).

The protein resides in the cytoplasm. It catalyses the reaction tRNA(Cys) + L-cysteine + ATP = L-cysteinyl-tRNA(Cys) + AMP + diphosphate. The chain is Cysteine--tRNA ligase from Nitratiruptor sp. (strain SB155-2).